A 329-amino-acid polypeptide reads, in one-letter code: Glutamine synthetase (329 aa).

The region spanning Tyr4–Ala86 is the GS beta-grasp domain. One can recognise a GS catalytic domain in the interval Pro89–Ser329. Residues Glu109 and Glu111 each contribute to the Mg(2+) site. Residue Glu167 coordinates ATP. Residues Glu172 and Glu179 each contribute to the Mg(2+) site. Residue Glu278 coordinates L-glutamate.

It belongs to the glutamine synthetase family. Homooctamer and homotetramer. Requires Mg(2+) as cofactor.

The protein localises to the cytoplasm. The enzyme catalyses L-glutamate + NH4(+) + ATP = L-glutamine + ADP + phosphate + H(+). Catalyzes the ATP-dependent biosynthesis of glutamine from glutamate and ammonia. In Rhizobium meliloti (Ensifer meliloti), this protein is Glutamine synthetase.